A 260-amino-acid polypeptide reads, in one-letter code: Thaumatin-like protein 1 (260 aa).

The signal sequence occupies residues 1–32 (MIITVLHSHVSFYFIILSFLFFHALHLVGSDG). 8 disulfide bridges follow: cysteine 41-cysteine 255, cysteine 89-cysteine 100, cysteine 105-cysteine 112, cysteine 166-cysteine 245, cysteine 171-cysteine 228, cysteine 179-cysteine 191, cysteine 195-cysteine 204, and cysteine 205-cysteine 215.

This sequence belongs to the thaumatin family. Expressed only in roots.

Functionally, involved in local responses of roots to colonization by non-pathogenic plant growth-promoting rhizobacteria (PGPR) fluorescent Pseudomonas spp., but seems to not being required for the establishment of subsequent induced systemic resistance (ISR). This is Thaumatin-like protein 1 from Arabidopsis thaliana (Mouse-ear cress).